The following is a 1296-amino-acid chain: MLDVNFFDELRIGLATADDIRQWSFGEVKKPETINYRTLKPEKDGLFCEKIFGPTRDWECYCGKYKRVRFKGIICERCGVEVTRAKVRRERMGHIELAAPVTHIWYFKGVPSRLGYLLDLAPKDLEKVIYFAAYMITKVDIDSRHRDLPTLEARIGVEKQQLEDKKNADVETRQRKLEEDLAQLEAEGAKGDARRKVRESAEREMRQIRDRSQRKIDDLDRVFDRFKNMKVQDLEPDELLFRELRDRFGQYFEGGMGAEALQHRLADFDLAAEAESLRETIRSGKGQKKARALKRLKVVSAFLNTRNSPMGMVLDCVPVIPPDLRPMVQLDGGRFATSDLNDLYRRVINRNNRLKRLLDLGAPEIIVNNEKRMLQEAVDALFDNGRRGRPVTGPGNRPLKSLSDMLKGKQGRFRQNLLGKRVDYSGRSVIVVGPQLKLHQCGLPKQMALELFKPFVMKRLVDLNHAQNIKSAKRMVERARPVVWDVLEEVITEHPVLLNRAPTLHRLGIQAFEPQLVEGKAIQIHPLVCTAFNADFDGDQMAVHLPLSAEAQAEARILMLSSNNILSPASGRPLAMPSLDMVTGVFHLSRVSEGAIGEGRFFSSVAEAQMAFDAREIHLQARIQVRLRESTPPAEWAPPADWLPGDPFTLETTFGRCLLNEALPEGYPFINAQLNKKAQAAIVNDLAERYPKIQVAATLDALKSAGFYWATRSGVTVAIEDVVAPPNKAQILDEYEQRAERVEKQFGRGFLSDEERRSELVQIWTEATNKIAEAMEANFPETNPVYTLVNSGAAGNMMQIRQLAGMRGLVSNPKGEIIPRPIKANFREGLTVVEYFISTHGARKGLADTALRTADSGYLTRRLVDVSQDVIVREEDCGTERGILTRIARKGPDGVLVRDRYAETSAYARSLASDAVDAQGEVVVPAGADAGDVVIGQIIEAGIESVRVRSALTCESRMGVCAHCYGRSLATGKLVDVGEAVGIVAAQSIGEPGTQLTMRTFHSGGVAGDDITQGLPRVVELFEARSPKGKAPISEVTGRVKIEETEKTFKVVIVPDDGSEEIAYPVSRRSRLRVREGERVEVGAQLIDGAVDPHEVLRILGPRQVQLHLVDQVQEVYRSQGVSIHDKHIEIIIRQMLKRVNVLESGETTLLPGELVERARFEGENRRVVEIGGQPASARPVLMGITKASLATESWLSAASFQETTRVLTDAAINARSDSLVGLKENVIIGKLIPAGTGISRYRNIRVEPTDEARAAMYSVSGYEDGASVEYGAFGAGSGQAVPLDEFDYRSSGDYR.

The Zn(2+) site is built by cysteine 60, cysteine 62, cysteine 75, and cysteine 78. The segment at 188 to 209 is disordered; sequence GAKGDARRKVRESAEREMRQIR. Residues aspartate 535, aspartate 537, and aspartate 539 each contribute to the Mg(2+) site. Residues cysteine 877, cysteine 954, cysteine 961, and cysteine 964 each coordinate Zn(2+).

The protein belongs to the RNA polymerase beta' chain family. The RNAP catalytic core consists of 2 alpha, 1 beta, 1 beta' and 1 omega subunit. When a sigma factor is associated with the core the holoenzyme is formed, which can initiate transcription. It depends on Mg(2+) as a cofactor. The cofactor is Zn(2+).

It catalyses the reaction RNA(n) + a ribonucleoside 5'-triphosphate = RNA(n+1) + diphosphate. DNA-dependent RNA polymerase catalyzes the transcription of DNA into RNA using the four ribonucleoside triphosphates as substrates. The polypeptide is DNA-directed RNA polymerase subunit beta' (Parafrankia sp. (strain EAN1pec)).